The chain runs to 226 residues: Cytidylate kinase (226 aa).

10 to 18 is an ATP binding site; it reads GPASSGKST.

The protein belongs to the cytidylate kinase family. Type 1 subfamily.

The protein resides in the cytoplasm. The catalysed reaction is CMP + ATP = CDP + ADP. The enzyme catalyses dCMP + ATP = dCDP + ADP. The protein is Cytidylate kinase of Streptococcus pyogenes serotype M5 (strain Manfredo).